Reading from the N-terminus, the 341-residue chain is Phosphoribosylformylglycinamidine cyclo-ligase (341 aa).

The protein belongs to the AIR synthase family.

The protein resides in the cytoplasm. It carries out the reaction 2-formamido-N(1)-(5-O-phospho-beta-D-ribosyl)acetamidine + ATP = 5-amino-1-(5-phospho-beta-D-ribosyl)imidazole + ADP + phosphate + H(+). The protein operates within purine metabolism; IMP biosynthesis via de novo pathway; 5-amino-1-(5-phospho-D-ribosyl)imidazole from N(2)-formyl-N(1)-(5-phospho-D-ribosyl)glycinamide: step 2/2. In Xanthomonas axonopodis pv. citri (strain 306), this protein is Phosphoribosylformylglycinamidine cyclo-ligase.